Consider the following 173-residue polypeptide: Phosphopantetheine adenylyltransferase (173 aa).

Serine 9 is a substrate binding site. Residues 9-10 and histidine 17 contribute to the ATP site; that span reads SF. Residues lysine 41, threonine 73, and arginine 87 each contribute to the substrate site. Residues 88 to 90, glutamate 98, and 123 to 129 each bind ATP; these read GVR and YQYLSSS.

This sequence belongs to the bacterial CoaD family. As to quaternary structure, homohexamer. The cofactor is Mg(2+).

Its subcellular location is the cytoplasm. The catalysed reaction is (R)-4'-phosphopantetheine + ATP + H(+) = 3'-dephospho-CoA + diphosphate. The protein operates within cofactor biosynthesis; coenzyme A biosynthesis; CoA from (R)-pantothenate: step 4/5. In terms of biological role, reversibly transfers an adenylyl group from ATP to 4'-phosphopantetheine, yielding dephospho-CoA (dPCoA) and pyrophosphate. This chain is Phosphopantetheine adenylyltransferase, found in Limosilactobacillus fermentum (strain NBRC 3956 / LMG 18251) (Lactobacillus fermentum).